Reading from the N-terminus, the 373-residue chain is Erythronate-4-phosphate dehydrogenase (373 aa).

2 residues coordinate substrate: S45 and T67. NAD(+) is bound by residues D147, 207–209 (ASR), and D233. R209 is an active-site residue. The active site involves E238. H255 serves as the catalytic Proton donor. Residue G258 coordinates NAD(+).

It belongs to the D-isomer specific 2-hydroxyacid dehydrogenase family. PdxB subfamily. In terms of assembly, homodimer.

It is found in the cytoplasm. It catalyses the reaction 4-phospho-D-erythronate + NAD(+) = (R)-3-hydroxy-2-oxo-4-phosphooxybutanoate + NADH + H(+). Its pathway is cofactor biosynthesis; pyridoxine 5'-phosphate biosynthesis; pyridoxine 5'-phosphate from D-erythrose 4-phosphate: step 2/5. Its function is as follows. Catalyzes the oxidation of erythronate-4-phosphate to 3-hydroxy-2-oxo-4-phosphonooxybutanoate. This Pseudoalteromonas translucida (strain TAC 125) protein is Erythronate-4-phosphate dehydrogenase.